The primary structure comprises 635 residues: Nuclear distribution protein nudE homolog 1 (635 aa).

A coiled-coil region spans residues 14 to 192 (EKEIKHWKSK…TILRDLVTRS (179 aa)). Disordered stretches follow at residues 35 to 63 (ESSL…NKTI), 200 to 267 (TMAS…LSRD), 279 to 328 (VLDD…SARA), 389 to 504 (SRVV…DHDP), and 516 to 635 (AAQA…TETF). Basic and acidic residues predominate over residues 43-56 (ESSKELEQEMEKEL). Polar residues-rich tracts occupy residues 201–224 (MASS…SPIK) and 237–246 (SRQALSSPVT). Over residues 280 to 299 (LDDSPTATTTSAAPTRSSTL) the composition is skewed to low complexity. Composition is skewed to polar residues over residues 314-326 (ASTS…SPSA) and 411-428 (GSPS…TSTP). The segment covering 516–541 (AAQASVAKRRTSMSGSGMSHSASHGS) has biased composition (low complexity). Composition is skewed to polar residues over residues 547-571 (SGST…SSMT) and 580-619 (SKRT…PAQT). Residues 620–635 (LSRSRSSSLGSETETF) are compositionally biased toward low complexity.

It belongs to the nudE family. As to quaternary structure, self-associates. Interacts with PAC1.

Its subcellular location is the cytoplasm. It is found in the cytoskeleton. Functionally, required for nuclear migration. This is Nuclear distribution protein nudE homolog 1 (NDE1) from Mycosarcoma maydis (Corn smut fungus).